Here is a 682-residue protein sequence, read N- to C-terminus: ATP-dependent DNA helicase RecG (682 aa).

A wedge domain region spans residues 46–139 (ELRDLEEVKH…LKNGPHQEDK (94 aa)). Residues 271–432 (DMSSPYRMNR…VFGEMDVSVI (162 aa)) form the Helicase ATP-binding domain. An ATP-binding site is contributed by 284-291 (GDVGSGKT). Positions 385–388 (DEQH) match the DEAH box motif. The Helicase C-terminal domain maps to 451 to 611 (MLDRILAFVE…GFELSEKDLE (161 aa)).

This sequence belongs to the helicase family. RecG subfamily. As to quaternary structure, monomer. Interacts with SSB (sbbA), via the latter's 6 C-terminal residues. Colocalizes with DNA pol III subunit gamma/tau (dnaX).

The protein localises to the cytoplasm. Its subcellular location is the nucleoid. It carries out the reaction Couples ATP hydrolysis with the unwinding of duplex DNA by translocating in the 3'-5' direction.. The enzyme catalyses ATP + H2O = ADP + phosphate + H(+). Its activity is regulated as follows. Replication fork regression on Holliday junctions (HJ) is inhibited by DisA; DisA inhibits the ATPase activity of RecG. Critical role in recombination and DNA repair. Helps process Holliday junction intermediates to mature products by catalyzing branch migration. Has a DNA unwinding activity characteristic of a DNA helicase with 3'-5' polarity. Unwinds branched duplex DNA (Y-DNA), Holliday junction (HJ) DNA and partially replicated forks as well as catalyzing fork reversal/regression. Does not seem to unwind R-loops. Inhibits the diadenylate cyclase (DAC) activity of DisA in the presence but not absence of HJ DNA, possibly by relocating DisA from the junction. This is ATP-dependent DNA helicase RecG from Bacillus subtilis (strain 168).